Reading from the N-terminus, the 427-residue chain is MSLLSEFQAQLQHSRYLIAFSGGADSTALLALFAKSRQNRPHLQLRAIHIHHGLNVAANDWAAHCRRICEKLEVPLIIERVEINKKSGIEQGAREARYAAIRCHRHADEIVATAHHLQDQTETFLLALKRGSGIKGLGAMQRESRLYGMPIFRPLLPFGKTELENYLRAQSLDWIEDDSNADNRYDRNFLRNRILPVLRRRWTDFDLAVSRSAQHCYEQERLIRELLTPAFEKNYRKTDRTFALSDFAGYSPNKQNALLRMWLTACRVPMPEKMQLAQLIRDVVFAKPDAVPQFVLGEQVIRRYQNRLYLTPHYADVTDFRARLTVNKTVELPDNLGRLHLIKNTKNLTALWQYEDWQYSADFPLGEQQISVGFGYAGKVKLHARDMSRDIKKVWQKYAVPPWRRTRIPLIFVDGKLKSAVGFFDVF.

21–26 (SGGADS) provides a ligand contact to ATP.

Belongs to the tRNA(Ile)-lysidine synthase family.

It localises to the cytoplasm. It carries out the reaction cytidine(34) in tRNA(Ile2) + L-lysine + ATP = lysidine(34) in tRNA(Ile2) + AMP + diphosphate + H(+). Its function is as follows. Ligates lysine onto the cytidine present at position 34 of the AUA codon-specific tRNA(Ile) that contains the anticodon CAU, in an ATP-dependent manner. Cytidine is converted to lysidine, thus changing the amino acid specificity of the tRNA from methionine to isoleucine. This Actinobacillus succinogenes (strain ATCC 55618 / DSM 22257 / CCUG 43843 / 130Z) protein is tRNA(Ile)-lysidine synthase.